Consider the following 633-residue polypeptide: 1-deoxy-D-xylulose-5-phosphate synthase (633 aa).

Thiamine diphosphate is bound by residues H72 and 113–115; that span reads GHS. D144 is a Mg(2+) binding site. Residues 145 to 146, N173, Y284, and E367 each bind thiamine diphosphate; that span reads GA. N173 lines the Mg(2+) pocket.

The protein belongs to the transketolase family. DXPS subfamily. As to quaternary structure, homodimer. Mg(2+) serves as cofactor. Thiamine diphosphate is required as a cofactor.

The catalysed reaction is D-glyceraldehyde 3-phosphate + pyruvate + H(+) = 1-deoxy-D-xylulose 5-phosphate + CO2. Its pathway is metabolic intermediate biosynthesis; 1-deoxy-D-xylulose 5-phosphate biosynthesis; 1-deoxy-D-xylulose 5-phosphate from D-glyceraldehyde 3-phosphate and pyruvate: step 1/1. Its function is as follows. Catalyzes the acyloin condensation reaction between C atoms 2 and 3 of pyruvate and glyceraldehyde 3-phosphate to yield 1-deoxy-D-xylulose-5-phosphate (DXP). The protein is 1-deoxy-D-xylulose-5-phosphate synthase of Bacillus licheniformis (strain ATCC 14580 / DSM 13 / JCM 2505 / CCUG 7422 / NBRC 12200 / NCIMB 9375 / NCTC 10341 / NRRL NRS-1264 / Gibson 46).